A 101-amino-acid chain; its full sequence is Small ribosomal subunit protein uS14 (101 aa).

Residues 32–62 (GDAKRSDAEREAARLGLQKLPRNANPTRQRN) are disordered. Positions 33-44 (DAKRSDAEREAA) are enriched in basic and acidic residues.

The protein belongs to the universal ribosomal protein uS14 family. Part of the 30S ribosomal subunit. Contacts proteins S3 and S10.

In terms of biological role, binds 16S rRNA, required for the assembly of 30S particles and may also be responsible for determining the conformation of the 16S rRNA at the A site. This Verminephrobacter eiseniae (strain EF01-2) protein is Small ribosomal subunit protein uS14.